Consider the following 729-residue polypeptide: Rho GTPase-activating protein 28 (729 aa).

The tract at residues 1-78 (MEVEDSGGVV…ASVDSSASME (78 aa)) is disordered. Residues 37-49 (LSRKSIPRCRRIN) show a composition bias toward basic residues. The span at 63–76 (SRSNSQASVDSSAS) shows a compositional bias: low complexity. At Ser-70 the chain carries Phosphoserine. A Phosphothreonine modification is found at Thr-164. A disordered region spans residues 180–234 (FGVSESPPSDSCEHATQLDGTKEEKDLPGVTKTSRPLPDDASLSSTTLSNGAQDE). Positions 221–231 (SLSSTTLSNGA) are enriched in polar residues. A Rho-GAP domain is found at 384–581 (VPLTVLLDND…LMLKYQKILW (198 aa)).

Its function is as follows. GTPase activator for the Rho-type GTPases by converting them to an inactive GDP-bound state. The protein is Rho GTPase-activating protein 28 (Arhgap28) of Mus musculus (Mouse).